Reading from the N-terminus, the 72-residue chain is Exodeoxyribonuclease 7 small subunit (72 aa).

This sequence belongs to the XseB family. In terms of assembly, heterooligomer composed of large and small subunits.

It is found in the cytoplasm. It carries out the reaction Exonucleolytic cleavage in either 5'- to 3'- or 3'- to 5'-direction to yield nucleoside 5'-phosphates.. Bidirectionally degrades single-stranded DNA into large acid-insoluble oligonucleotides, which are then degraded further into small acid-soluble oligonucleotides. The chain is Exodeoxyribonuclease 7 small subunit from Chlamydia trachomatis serovar A (strain ATCC VR-571B / DSM 19440 / HAR-13).